The primary structure comprises 1331 residues: ABC multidrug transporter MDR2 (1331 aa).

The segment at 1–50 (MVEPSEKPNTQNDDVSKQEIRNPVSSSSSTSDKEKVAKKGNSDATKSLTP) is disordered. The span at 31–41 (SDKEKVAKKGN) shows a compositional bias: basic and acidic residues. 4 helical membrane passes run 93 to 113 (MILL…LPLF), 147 to 167 (YFVY…VGFI), 219 to 239 (KVGL…IGYV), and 242 to 262 (WKLA…MGGI). Residues 97–387 (AIVSLASIAA…VAPNTQAFAS (291 aa)) enclose the ABC transmembrane type-1 1 domain. Asparagine 293 carries an N-linked (GlcNAc...) asparagine glycan. The next 2 membrane-spanning stretches (helical) occupy residues 325–345 (LGIM…LGFW) and 358–378 (LSAI…IGNV). Residues 422-667 (IEFRGIKHIY…KGTYLQLVEA (246 aa)) enclose the ABC transporter 1 domain. 457–464 (GPSGSGKS) lines the ATP pocket. Residue asparagine 529 is glycosylated (N-linked (GlcNAc...) asparagine). 2 consecutive transmembrane segments (helical) span residues 762-782 (LCGF…SVFF) and 808-828 (LMFL…GVIF). In terms of domain architecture, ABC transmembrane type-1 2 spans 764–1051 (GFFFAVLSGA…VFSFSPDMGK (288 aa)). Asparagine 860 carries N-linked (GlcNAc...) asparagine glycosylation. 4 helical membrane-spanning segments follow: residues 884–904 (LGTI…ALAF), 910–930 (LVCI…FWIL), 995–1015 (ASQS…GGLL), and 1025–1045 (FFLC…VFSF). One can recognise an ABC transporter 2 domain in the interval 1086 to 1324 (IEFRDVHFRY…KGRYYELVHM (239 aa)). N-linked (GlcNAc...) asparagine glycosylation occurs at asparagine 1108. 1121-1128 (GPSGCGKS) contacts ATP.

This sequence belongs to the ABC transporter superfamily. ABCB family. Multidrug resistance exporter (TC 3.A.1.201) subfamily.

The protein resides in the cell membrane. The enzyme catalyses itraconazole(in) + ATP + H2O = itraconazole(out) + ADP + phosphate + H(+). Functionally, ABC-type efflux transporter involved in the modulation susceptibility to itraconazole. The polypeptide is ABC multidrug transporter MDR2 (Trichophyton rubrum (strain ATCC MYA-4607 / CBS 118892) (Athlete's foot fungus)).